The following is a 202-amino-acid chain: ATP-dependent Clp protease proteolytic subunit (202 aa).

Residue serine 106 is the Nucleophile of the active site. Histidine 131 is a catalytic residue.

Belongs to the peptidase S14 family. As to quaternary structure, fourteen ClpP subunits assemble into 2 heptameric rings which stack back to back to give a disk-like structure with a central cavity, resembling the structure of eukaryotic proteasomes.

The protein resides in the cytoplasm. The catalysed reaction is Hydrolysis of proteins to small peptides in the presence of ATP and magnesium. alpha-casein is the usual test substrate. In the absence of ATP, only oligopeptides shorter than five residues are hydrolyzed (such as succinyl-Leu-Tyr-|-NHMec, and Leu-Tyr-Leu-|-Tyr-Trp, in which cleavage of the -Tyr-|-Leu- and -Tyr-|-Trp bonds also occurs).. Functionally, cleaves peptides in various proteins in a process that requires ATP hydrolysis. Has a chymotrypsin-like activity. Plays a major role in the degradation of misfolded proteins. The polypeptide is ATP-dependent Clp protease proteolytic subunit (Paracidovorax citrulli (strain AAC00-1) (Acidovorax citrulli)).